The chain runs to 815 residues: Heme-copper oxidase subunit I+III (815 aa).

Residues 1-467 (MVSRLRGFLA…QLSTLGAFIF (467 aa)) are COX1. The chain crosses the membrane as a helical span at residues 26 to 46 (LLYLVTSIAFLLIAGSLALLF). His-70 contributes to the Fe(II)-heme a binding site. The next 18 membrane-spanning stretches (helical) occupy residues 71 to 91 (GLIM…NYIV), 105 to 125 (LNAL…ASFF), 157 to 177 (LAIF…LVTI), 197 to 217 (ILFT…GGAL), 242 to 262 (LFWF…LGAM), 281 to 301 (LTAF…HMFI), 314 to 334 (ITTI…IFTL), 339 to 359 (LVYT…IIGG), 380 to 400 (VVAH…IAGL), 419 to 439 (IHFA…FALM), 463 to 483 (GAFI…YSLV), 580 to 600 (ALFG…VFLL), 637 to 657 (WVFI…YFFI), 683 to 703 (LINT…YLGV), 708 to 728 (YLIT…FLTV), 736 to 756 (LLIA…YVTT), 758 to 778 (AHAL…VKLF), and 791 to 811 (VLAV…VFPL). Residues His-248, Tyr-252, His-297, and His-298 each contribute to the Cu cation site. The 1'-histidyl-3'-tyrosine (His-Tyr) cross-link spans 248–252 (HPEVY). A heme a3-binding site is contributed by His-383. Residue His-385 coordinates Fe(II)-heme a. Residues 545–815 (DVSNVPLSGG…TLVFPLYYLV (271 aa)) are COX3.

The protein in the N-terminal section; belongs to the heme-copper respiratory oxidase family. It in the C-terminal section; belongs to the cytochrome c oxidase subunit 3 family. The cofactor is heme. Cu cation is required as a cofactor.

It localises to the cell membrane. The polypeptide is Heme-copper oxidase subunit I+III (aoxB) (Aeropyrum pernix (strain ATCC 700893 / DSM 11879 / JCM 9820 / NBRC 100138 / K1)).